We begin with the raw amino-acid sequence, 170 residues long: uncharacterized protein (170 aa).

The helical transmembrane segment at 96–116 (FSAISIGSFPIVLFLSLFFFD) threads the bilayer.

It localises to the membrane. This is an uncharacterized protein from Borreliella burgdorferi (strain ATCC 35210 / DSM 4680 / CIP 102532 / B31) (Borrelia burgdorferi).